The primary structure comprises 172 residues: Orotate phosphoribosyltransferase (172 aa).

Residues Arg-88, Lys-89, Lys-92, His-94, and 113 to 121 (EDVTTSGGS) each bind 5-phospho-alpha-D-ribose 1-diphosphate. Orotate is bound by residues Thr-117 and Arg-145.

The protein belongs to the purine/pyrimidine phosphoribosyltransferase family. PyrE subfamily. In terms of assembly, homodimer. Requires Mg(2+) as cofactor.

The enzyme catalyses orotidine 5'-phosphate + diphosphate = orotate + 5-phospho-alpha-D-ribose 1-diphosphate. The protein operates within pyrimidine metabolism; UMP biosynthesis via de novo pathway; UMP from orotate: step 1/2. Catalyzes the transfer of a ribosyl phosphate group from 5-phosphoribose 1-diphosphate to orotate, leading to the formation of orotidine monophosphate (OMP). This is Orotate phosphoribosyltransferase from Methanospirillum hungatei JF-1 (strain ATCC 27890 / DSM 864 / NBRC 100397 / JF-1).